Reading from the N-terminus, the 496-residue chain is Glycerol kinase (496 aa).

ADP is bound at residue threonine 12. Residues threonine 12, threonine 13, and serine 14 each coordinate ATP. Residue threonine 12 participates in sn-glycerol 3-phosphate binding. Arginine 16 lines the ADP pocket. Positions 82, 83, and 134 each coordinate sn-glycerol 3-phosphate. The glycerol site is built by arginine 82, glutamate 83, and tyrosine 134. Histidine 230 bears the Phosphohistidine; by HPr mark. Residue aspartate 244 coordinates sn-glycerol 3-phosphate. Glycerol is bound by residues aspartate 244 and glutamine 245. 2 residues coordinate ADP: threonine 266 and glycine 309. ATP-binding residues include threonine 266, glycine 309, glutamine 313, and glycine 410. Residues glycine 410 and asparagine 414 each coordinate ADP.

It belongs to the FGGY kinase family. As to quaternary structure, homotetramer and homodimer (in equilibrium). The phosphoenolpyruvate-dependent sugar phosphotransferase system (PTS), including enzyme I, and histidine-containing protein (HPr) are required for the phosphorylation, which leads to the activation of the enzyme.

It catalyses the reaction glycerol + ATP = sn-glycerol 3-phosphate + ADP + H(+). It functions in the pathway polyol metabolism; glycerol degradation via glycerol kinase pathway; sn-glycerol 3-phosphate from glycerol: step 1/1. Activated by phosphorylation and inhibited by fructose 1,6-bisphosphate (FBP). Functionally, key enzyme in the regulation of glycerol uptake and metabolism. Catalyzes the phosphorylation of glycerol to yield sn-glycerol 3-phosphate. The chain is Glycerol kinase from Geobacillus kaustophilus (strain HTA426).